The sequence spans 556 residues: 2-succinyl-5-enolpyruvyl-6-hydroxy-3-cyclohexene-1-carboxylate synthase (556 aa).

Belongs to the TPP enzyme family. MenD subfamily. In terms of assembly, homodimer. It depends on Mg(2+) as a cofactor. Mn(2+) is required as a cofactor. The cofactor is thiamine diphosphate.

The catalysed reaction is isochorismate + 2-oxoglutarate + H(+) = 5-enolpyruvoyl-6-hydroxy-2-succinyl-cyclohex-3-ene-1-carboxylate + CO2. It functions in the pathway quinol/quinone metabolism; 1,4-dihydroxy-2-naphthoate biosynthesis; 1,4-dihydroxy-2-naphthoate from chorismate: step 2/7. It participates in quinol/quinone metabolism; menaquinone biosynthesis. Its function is as follows. Catalyzes the thiamine diphosphate-dependent decarboxylation of 2-oxoglutarate and the subsequent addition of the resulting succinic semialdehyde-thiamine pyrophosphate anion to isochorismate to yield 2-succinyl-5-enolpyruvyl-6-hydroxy-3-cyclohexene-1-carboxylate (SEPHCHC). In Staphylococcus epidermidis (strain ATCC 12228 / FDA PCI 1200), this protein is 2-succinyl-5-enolpyruvyl-6-hydroxy-3-cyclohexene-1-carboxylate synthase.